Consider the following 251-residue polypeptide: Probable transcriptional regulatory protein CC_3243 (251 aa).

It belongs to the TACO1 family.

It is found in the cytoplasm. The protein is Probable transcriptional regulatory protein CC_3243 of Caulobacter vibrioides (strain ATCC 19089 / CIP 103742 / CB 15) (Caulobacter crescentus).